A 534-amino-acid polypeptide reads, in one-letter code: Bifunctional pantoate ligase/cytidylate kinase (534 aa).

Residues 1–302 (MRLLTTVAAL…LGSTRLIDNT (302 aa)) form a pantoate--beta-alanine ligase region. Residue 48–55 (MGSLHQGH) coordinates ATP. The Proton donor role is filled by H55. Position 79 (Q79) interacts with (R)-pantoate. Q79 is a binding site for beta-alanine. 172–175 (GQKD) contacts ATP. Q178 contributes to the (R)-pantoate binding site. ATP is bound by residues V201 and 209 to 212 (CSSR). Residues 303-534 (ILRDRQPIIA…DYYQQRLSQW (232 aa)) form a cytidylate kinase region.

It in the N-terminal section; belongs to the pantothenate synthetase family. In the C-terminal section; belongs to the cytidylate kinase family. Type 1 subfamily.

Its subcellular location is the cytoplasm. The catalysed reaction is (R)-pantoate + beta-alanine + ATP = (R)-pantothenate + AMP + diphosphate + H(+). It catalyses the reaction CMP + ATP = CDP + ADP. The enzyme catalyses dCMP + ATP = dCDP + ADP. It participates in cofactor biosynthesis; (R)-pantothenate biosynthesis; (R)-pantothenate from (R)-pantoate and beta-alanine: step 1/1. Its function is as follows. Catalyzes the condensation of pantoate with beta-alanine in an ATP-dependent reaction via a pantoyl-adenylate intermediate. Functionally, catalyzes the transfer of a phosphate group from ATP to either CMP or dCMP to form CDP or dCDP and ADP, respectively. The sequence is that of Bifunctional pantoate ligase/cytidylate kinase from Trichormus variabilis (strain ATCC 29413 / PCC 7937) (Anabaena variabilis).